A 319-amino-acid chain; its full sequence is Transaldolase (319 aa).

Lys-131 (schiff-base intermediate with substrate) is an active-site residue.

Belongs to the transaldolase family. Type 1 subfamily. In terms of assembly, homodimer.

It localises to the cytoplasm. The enzyme catalyses D-sedoheptulose 7-phosphate + D-glyceraldehyde 3-phosphate = D-erythrose 4-phosphate + beta-D-fructose 6-phosphate. The protein operates within carbohydrate degradation; pentose phosphate pathway; D-glyceraldehyde 3-phosphate and beta-D-fructose 6-phosphate from D-ribose 5-phosphate and D-xylulose 5-phosphate (non-oxidative stage): step 2/3. Functionally, transaldolase is important for the balance of metabolites in the pentose-phosphate pathway. In Wigglesworthia glossinidia brevipalpis, this protein is Transaldolase.